A 467-amino-acid polypeptide reads, in one-letter code: Light-independent protochlorophyllide reductase subunit N (467 aa).

3 residues coordinate [4Fe-4S] cluster: C23, C48, and C108.

This sequence belongs to the BchN/ChlN family. As to quaternary structure, protochlorophyllide reductase is composed of three subunits; ChlL, ChlN and ChlB. Forms a heterotetramer of two ChlB and two ChlN subunits. The cofactor is [4Fe-4S] cluster.

The catalysed reaction is chlorophyllide a + oxidized 2[4Fe-4S]-[ferredoxin] + 2 ADP + 2 phosphate = protochlorophyllide a + reduced 2[4Fe-4S]-[ferredoxin] + 2 ATP + 2 H2O. Its pathway is porphyrin-containing compound metabolism; chlorophyll biosynthesis (light-independent). In terms of biological role, component of the dark-operative protochlorophyllide reductase (DPOR) that uses Mg-ATP and reduced ferredoxin to reduce ring D of protochlorophyllide (Pchlide) to form chlorophyllide a (Chlide). This reaction is light-independent. The NB-protein (ChlN-ChlB) is the catalytic component of the complex. This chain is Light-independent protochlorophyllide reductase subunit N, found in Trichormus variabilis (strain ATCC 29413 / PCC 7937) (Anabaena variabilis).